Here is a 595-residue protein sequence, read N- to C-terminus: Acriflavine sensitivity control protein acr-2 (595 aa).

Positions 22-49 (CYNCHRKRLRCDKSLPACLKCSINGEEC) form a DNA-binding region, zn(2)-C6 fungal-type. A compositionally biased stretch (low complexity) spans 69–88 (TTRTTNKTNFNGTNTTTPRT). Positions 69–172 (TTRTTNKTNF…PDDNPDPSSQ (104 aa)) are disordered. Over residues 89 to 117 (VKSSTPTQAPTPSDSPRQLDTDVTSSSAP) the composition is skewed to polar residues. Low complexity predominate over residues 118–138 (SHTCSRSTTTSTTTTRISSPT).

The protein localises to the nucleus. Probable transcriptional regulator. In Neurospora crassa (strain ATCC 24698 / 74-OR23-1A / CBS 708.71 / DSM 1257 / FGSC 987), this protein is Acriflavine sensitivity control protein acr-2 (acr-2).